Consider the following 159-residue polypeptide: Large ribosomal subunit protein mL50 (159 aa).

Belongs to the mitochondrion-specific ribosomal protein mL50 family. In terms of assembly, component of the mitochondrial ribosome large subunit (39S) which comprises a 16S rRNA and about 50 distinct proteins.

The protein localises to the mitochondrion. This chain is Large ribosomal subunit protein mL50 (Mrpl50), found in Mus musculus (Mouse).